A 179-amino-acid chain; its full sequence is Translation initiation factor IF-3 (179 aa).

The protein belongs to the IF-3 family. As to quaternary structure, monomer.

It is found in the cytoplasm. IF-3 binds to the 30S ribosomal subunit and shifts the equilibrium between 70S ribosomes and their 50S and 30S subunits in favor of the free subunits, thus enhancing the availability of 30S subunits on which protein synthesis initiation begins. This chain is Translation initiation factor IF-3, found in Bradyrhizobium diazoefficiens (strain JCM 10833 / BCRC 13528 / IAM 13628 / NBRC 14792 / USDA 110).